Reading from the N-terminus, the 1534-residue chain is Dicer-like protein 1 (1534 aa).

The interval 36–70 (PSAEPGVEHDQISPGESDEEIEENISDQNNSSSQK) is disordered. The segment covering 51-60 (ESDEEIEENI) has biased composition (acidic residues). Residues 130-311 (LFERAKAQNT…AAATRLETLL (182 aa)) form the Helicase ATP-binding domain. 143–150 (LDTGSGKT) serves as a coordination point for ATP. A DEAH box motif is present at residues 256 to 259 (DEAH). Positions 456 to 613 (ELSKHFSHAP…FCETLPEDRI (158 aa)) constitute a Helicase C-terminal domain. The Dicer dsRNA-binding fold domain occupies 648 to 738 (AIAILARYAS…KSIYHKRLPA (91 aa)). Residues 888–1016 (KTVTFVQEND…ICAEPLKISA (129 aa)) form the PAZ domain. RNase III domains follow at residues 1054-1199 (SDYA…LSGG) and 1250-1402 (ALQV…VDSD). Mg(2+)-binding residues include glutamate 1291, aspartate 1388, and glutamate 1391. Positions 1436–1504 (TFLHNRLANE…SERALVVLDG (69 aa)) constitute a DRBM domain. Positions 1448, 1475, 1516, and 1518 each coordinate Zn(2+).

The protein belongs to the helicase family. Dicer subfamily. Requires Mg(2+) as cofactor. Mn(2+) is required as a cofactor.

Its function is as follows. Dicer-like endonuclease involved in cleaving double-stranded RNA in the RNA interference (RNAi) pathway. Produces 21 to 25 bp dsRNAs (siRNAs) which target the selective destruction of homologous RNAs leading to sequence-specific suppression of gene expression, called post-transcriptional gene silencing (PTGS). Part of a broad host defense response against viral infection and transposons. The sequence is that of Dicer-like protein 1 (dcl1) from Aspergillus clavatus (strain ATCC 1007 / CBS 513.65 / DSM 816 / NCTC 3887 / NRRL 1 / QM 1276 / 107).